The following is a 381-amino-acid chain: MVSLEQAEQIAAAIEVPDWVLTKSAALVYSCFGSAANAFESSIKINFPAQHAFVEAWMRARSHPFAERLPYLNPWHVIASILAYLSLIVTLRLLHRVLGKFSCRTLGLVHNLGLHLLSLYMSLGLMISARAAGYSLWNNAVGTSPAEWRIAKLIWLFYVSKVVEWVDTVIMLLKQNYHQVTFLHVYHHTTVFVLWWLALLVAPGGESYYSAMVNSGVHVFMYGYYFLTLLFPSGIVRDVLSKFKFAITKGQMWQFVFNCLQSAYDLVWVPREELKYSAELLQILFWYMISLLALFGNFLVKNKKFSHRRCVDAATASGAKEDTAARSHGDRTHRTRVKAGMTNMQLERLKNEKSTEMKLLMRKNGNGNGQKASLQAMAGSR.

A run of 7 helical transmembrane segments spans residues I10 to S30, L69 to V89, G107 to I127, L153 to L173, F182 to A202, G216 to V236, and L280 to V300. Positions H184–H188 match the HxxHH motif motif. H187 serves as the catalytic Nucleophile. The interval R362–R381 is disordered.

This sequence belongs to the ELO family.

Its subcellular location is the membrane. It participates in lipid metabolism; polyunsaturated fatty acid biosynthesis. Its function is as follows. Involved in the synthesis of fatty acids. Elongates C18 polyunsaturated fatty acids (PUFAs) with a preference for Delta6 PUFAs. The sequence is that of Fatty acid elongase 6 from Leishmania major.